A 372-amino-acid chain; its full sequence is F-box/kelch-repeat protein At5g48990 (372 aa).

The 47-residue stretch at 14-60 folds into the F-box domain; it reads SSPNPSLPEDLIVSILARVSRSYYTNLSVVSKTFRSILTSPELYKTR. One copy of the Kelch repeat lies at 176 to 222; sequence RTYFPGSSEKPDSLNCVEVYNTNTQTWNPVPPQKRKLKFGNMEGKIY.

This chain is F-box/kelch-repeat protein At5g48990, found in Arabidopsis thaliana (Mouse-ear cress).